A 254-amino-acid polypeptide reads, in one-letter code: Casein kinase II subunit beta-2 (254 aa).

It belongs to the casein kinase 2 subunit beta family. As to quaternary structure, tetramer composed of two alpha chains, one beta chain and one beta' chain. In terms of processing, phosphorylated by alpha subunit.

In terms of biological role, regulatory subunit of casein kinase II/CK2. As part of the kinase complex regulates the basal catalytic activity of the alpha subunit a constitutively active serine/threonine-protein kinase that phosphorylates a large number of substrates containing acidic residues C-terminal to the phosphorylated serine or threonine. The polypeptide is Casein kinase II subunit beta-2 (Schizosaccharomyces pombe (strain 972 / ATCC 24843) (Fission yeast)).